A 309-amino-acid polypeptide reads, in one-letter code: Porphobilinogen deaminase (309 aa).

Cysteine 241 bears the S-(dipyrrolylmethanemethyl)cysteine mark.

Belongs to the HMBS family. As to quaternary structure, monomer. The cofactor is dipyrromethane.

The enzyme catalyses 4 porphobilinogen + H2O = hydroxymethylbilane + 4 NH4(+). The protein operates within porphyrin-containing compound metabolism; protoporphyrin-IX biosynthesis; coproporphyrinogen-III from 5-aminolevulinate: step 2/4. Functionally, tetrapolymerization of the monopyrrole PBG into the hydroxymethylbilane pre-uroporphyrinogen in several discrete steps. This chain is Porphobilinogen deaminase, found in Oceanobacillus iheyensis (strain DSM 14371 / CIP 107618 / JCM 11309 / KCTC 3954 / HTE831).